Consider the following 281-residue polypeptide: Inositol diphosphatase SIW14 (281 aa).

A disordered region spans residues 1-20 (MGLYQAKNDEGSDPKSSSKI). Residues 7-20 (KNDEGSDPKSSSKI) are compositionally biased toward basic and acidic residues. At serine 94 the chain carries Phosphoserine. Residues 121–271 (NFSHVVGEIY…YDDDEIKRIA (151 aa)) form the Tyrosine-protein phosphatase domain. Asparagine 189, isoleucine 190, and histidine 193 together coordinate 1D-myo-inositol hexakisphosphate. Cysteine 214 (phosphocysteine intermediate) is an active-site residue.

This sequence belongs to the protein-tyrosine phosphatase family. Atypical dual-specificity phosphatase Siw14-like subfamily. Monomer.

It localises to the cytoplasm. It carries out the reaction 5-diphospho-1D-myo-inositol 1,2,3,4,6-pentakisphosphate + H2O = 1D-myo-inositol hexakisphosphate + phosphate + H(+). The catalysed reaction is 5-diphospho-1D-myo-inositol 1,3,4,6-tetrakisphosphate + H2O = 1D-myo-inositol 1,3,4,5,6-pentakisphosphate + phosphate + H(+). The enzyme catalyses 3,5-bis(diphospho)-1D-myo-inositol 1,2,4,6-tetrakisphosphate + H2O = 3-diphospho-1D-myo-inositol 1,2,4,5,6-pentakisphosphate + phosphate + 2 H(+). It catalyses the reaction 1,5-bis(diphospho)-1D-myo-inositol 2,3,4,6-tetrakisphosphate + H2O = 1-diphospho-1D-myo-inositol 2,3,4,5,6-pentakisphosphate + phosphate + 2 H(+). It carries out the reaction 6-diphospho-1D-myo-inositol pentakisphosphate + H2O = 1D-myo-inositol hexakisphosphate + phosphate + H(+). Selectively cleaves the beta-phosphate at the 5-position of soluble inositol pyrophosphates. Converts 5-diphosphoinositol tetrakisphosphate (5-PP-InsP(4)) into inositol pentakisphosphate (InsP(5)), 5-diphosphoinositol pentakisphosphate (5-PP-IP(5) or 5-InsP(7)) into inositol hexakisphosphate (IP(6) or InsP(6)), and 1,5-bisdiphosphoinositol tetrakisphosphate (1,5-PP-IP(5) or InsP(8)) into 1-diphosphoinositol pentakisphosphate (1-PP-IP(5) or 1-InsP(7)). Also has activity on 1,5-bis-diphosphoinositol 2,3,4,6-tetrakisphosphate (1,5-InsP(8)) and 3,5-InsP(8). Modulates inositol pyrophosphate metabolism that may have an influence in stress response. Plays a role in actin filament organization and endocytosis. Functions as a prion suppressing factor possibly due to its phosphatase activity against inositol pyrophosphates, which are signal transduction molecules involved in prion propagation. This is Inositol diphosphatase SIW14 (SIW14) from Saccharomyces cerevisiae (strain ATCC 204508 / S288c) (Baker's yeast).